A 341-amino-acid chain; its full sequence is Glycerol-3-phosphate dehydrogenase [NAD(P)+] (341 aa).

Positions 15, 16, 36, and 110 each coordinate NADPH. Sn-glycerol 3-phosphate is bound by residues lysine 110, glycine 139, and serine 141. Alanine 143 provides a ligand contact to NADPH. Sn-glycerol 3-phosphate-binding residues include lysine 194, aspartate 247, serine 257, arginine 258, and asparagine 259. Lysine 194 serves as the catalytic Proton acceptor. Arginine 258 provides a ligand contact to NADPH. Positions 282 and 284 each coordinate NADPH.

It belongs to the NAD-dependent glycerol-3-phosphate dehydrogenase family.

It localises to the cytoplasm. It carries out the reaction sn-glycerol 3-phosphate + NAD(+) = dihydroxyacetone phosphate + NADH + H(+). The catalysed reaction is sn-glycerol 3-phosphate + NADP(+) = dihydroxyacetone phosphate + NADPH + H(+). Its pathway is membrane lipid metabolism; glycerophospholipid metabolism. Functionally, catalyzes the reduction of the glycolytic intermediate dihydroxyacetone phosphate (DHAP) to sn-glycerol 3-phosphate (G3P), the key precursor for phospholipid synthesis. This chain is Glycerol-3-phosphate dehydrogenase [NAD(P)+], found in Xanthomonas campestris pv. campestris (strain 8004).